A 319-amino-acid chain; its full sequence is Acetyl-coenzyme A carboxylase carboxyl transferase subunit alpha (319 aa).

The region spanning 35 to 296 (NLDEEVQRLR…KAQLLADLND (262 aa)) is the CoA carboxyltransferase C-terminal domain.

It belongs to the AccA family. Acetyl-CoA carboxylase is a heterohexamer composed of biotin carboxyl carrier protein (AccB), biotin carboxylase (AccC) and two subunits each of ACCase subunit alpha (AccA) and ACCase subunit beta (AccD).

Its subcellular location is the cytoplasm. It catalyses the reaction N(6)-carboxybiotinyl-L-lysyl-[protein] + acetyl-CoA = N(6)-biotinyl-L-lysyl-[protein] + malonyl-CoA. It participates in lipid metabolism; malonyl-CoA biosynthesis; malonyl-CoA from acetyl-CoA: step 1/1. Functionally, component of the acetyl coenzyme A carboxylase (ACC) complex. First, biotin carboxylase catalyzes the carboxylation of biotin on its carrier protein (BCCP) and then the CO(2) group is transferred by the carboxyltransferase to acetyl-CoA to form malonyl-CoA. The polypeptide is Acetyl-coenzyme A carboxylase carboxyl transferase subunit alpha (Yersinia pseudotuberculosis serotype O:3 (strain YPIII)).